The primary structure comprises 309 residues: MTDSLIHTGPFLVAALYHFVSVPRFASLQAPLQALSEENGVKGTLLLAHEGINGTIAGPDAGIHAVLAFLRAQPEFARLEHKESRASKMPFLRMKVKLKKEIVTMGVEDIDPNKVVGTYVAPRDWNALISDPDTIVIDTRNDYETAIGTFRGALDPKTKTFREFPDWVRRNTGLHNKPKVAMYCTGGIRCEKATAFMKAEGFDEVYHLKGGILKYLEEVPQEESLWEGACFVFDERVSVEHGLKEGEHRLCHACRNPITSEEITSPLYEEGVSCSHCYHTRTEEDRLRYRQRQLQIALARKRGQRHIGS.

In terms of domain architecture, Rhodanese spans 130 to 224 (SDPDTIVIDT…YLEEVPQEES (95 aa)). The active-site Cysteine persulfide intermediate is the cysteine 184.

Belongs to the TrhO family.

It catalyses the reaction uridine(34) in tRNA + AH2 + O2 = 5-hydroxyuridine(34) in tRNA + A + H2O. In terms of biological role, catalyzes oxygen-dependent 5-hydroxyuridine (ho5U) modification at position 34 in tRNAs. The protein is tRNA uridine(34) hydroxylase of Rhizobium etli (strain ATCC 51251 / DSM 11541 / JCM 21823 / NBRC 15573 / CFN 42).